The primary structure comprises 352 residues: Thiamine-phosphate synthase (352 aa).

The unknown stretch occupies residues 1–128 (MNPTPSETSL…AAEAAAIRYG (128 aa)). Residues 63-85 (SYKQARSTSTDTGAGLKHPAQLD) form a disordered region. The interval 129 to 352 (LYDLEVTCLN…LLQQLDQATI (224 aa)) is thiamine-phosphate synthase. 4-amino-2-methyl-5-(diphosphooxymethyl)pyrimidine contacts are provided by residues 180–184 (QYRCK) and Asn212. Residues Asp213 and Asp232 each coordinate Mg(2+). 2 residues coordinate 4-amino-2-methyl-5-(diphosphooxymethyl)pyrimidine: Ser251 and Lys280. Gly307 provides a ligand contact to 2-[(2R,5Z)-2-carboxy-4-methylthiazol-5(2H)-ylidene]ethyl phosphate.

Belongs to the thiamine-phosphate synthase family. Requires Mg(2+) as cofactor.

It carries out the reaction 2-[(2R,5Z)-2-carboxy-4-methylthiazol-5(2H)-ylidene]ethyl phosphate + 4-amino-2-methyl-5-(diphosphooxymethyl)pyrimidine + 2 H(+) = thiamine phosphate + CO2 + diphosphate. It catalyses the reaction 2-(2-carboxy-4-methylthiazol-5-yl)ethyl phosphate + 4-amino-2-methyl-5-(diphosphooxymethyl)pyrimidine + 2 H(+) = thiamine phosphate + CO2 + diphosphate. The catalysed reaction is 4-methyl-5-(2-phosphooxyethyl)-thiazole + 4-amino-2-methyl-5-(diphosphooxymethyl)pyrimidine + H(+) = thiamine phosphate + diphosphate. Its pathway is cofactor biosynthesis; thiamine diphosphate biosynthesis; thiamine phosphate from 4-amino-2-methyl-5-diphosphomethylpyrimidine and 4-methyl-5-(2-phosphoethyl)-thiazole: step 1/1. Condenses 4-methyl-5-(beta-hydroxyethyl)thiazole monophosphate (THZ-P) and 2-methyl-4-amino-5-hydroxymethyl pyrimidine pyrophosphate (HMP-PP) to form thiamine monophosphate (TMP). The polypeptide is Thiamine-phosphate synthase (Synechococcus sp. (strain CC9605)).